The following is a 760-amino-acid chain: Xaa-Pro dipeptidyl-peptidase (760 aa).

Active-site charge relay system residues include Ser-349, Asp-469, and His-499.

Belongs to the peptidase S15 family. In terms of assembly, homodimer.

The protein localises to the cytoplasm. The catalysed reaction is Hydrolyzes Xaa-Pro-|- bonds to release unblocked, N-terminal dipeptides from substrates including Ala-Pro-|-p-nitroanilide and (sequentially) Tyr-Pro-|-Phe-Pro-|-Gly-Pro-|-Ile.. Removes N-terminal dipeptides sequentially from polypeptides having unsubstituted N-termini provided that the penultimate residue is proline. The chain is Xaa-Pro dipeptidyl-peptidase from Streptococcus pyogenes serotype M1.